The primary structure comprises 346 residues: NADH-ubiquinone oxidoreductase chain 2 (346 aa).

A run of 11 helical transmembrane segments spans residues 1–21 (MNPH…TITI), 25–45 (HWVL…PLIS), 60–80 (FLTQ…NAWA), 95–115 (CLLL…HFWF), 124–144 (LMTA…LLLM), 149–169 (LNPA…GWMG), 178–195 (ILAF…IILV), 200–219 (LALL…FMAL), 242–262 (ATLM…GFMP), 274–294 (EMTP…FFYL), and 326–346 (AILA…HAIV).

It belongs to the complex I subunit 2 family.

Its subcellular location is the mitochondrion inner membrane. It catalyses the reaction a ubiquinone + NADH + 5 H(+)(in) = a ubiquinol + NAD(+) + 4 H(+)(out). Functionally, core subunit of the mitochondrial membrane respiratory chain NADH dehydrogenase (Complex I) that is believed to belong to the minimal assembly required for catalysis. Complex I functions in the transfer of electrons from NADH to the respiratory chain. The immediate electron acceptor for the enzyme is believed to be ubiquinone. This Mareca americana (American wigeon) protein is NADH-ubiquinone oxidoreductase chain 2 (MT-ND2).